The primary structure comprises 501 residues: Glycerol kinase (501 aa).

Residue T11 coordinates ADP. The ATP site is built by T11, T12, and S13. Residue T11 participates in sn-glycerol 3-phosphate binding. R15 is a binding site for ADP. Residues R81, E82, Y133, and D242 each coordinate sn-glycerol 3-phosphate. Residues R81, E82, Y133, D242, and Q243 each contribute to the glycerol site. Positions 264 and 307 each coordinate ADP. ATP contacts are provided by T264, G307, Q311, and G409. Residues G409 and N413 each contribute to the ADP site.

The protein belongs to the FGGY kinase family.

The catalysed reaction is glycerol + ATP = sn-glycerol 3-phosphate + ADP + H(+). Its pathway is polyol metabolism; glycerol degradation via glycerol kinase pathway; sn-glycerol 3-phosphate from glycerol: step 1/1. With respect to regulation, inhibited by fructose 1,6-bisphosphate (FBP). Functionally, key enzyme in the regulation of glycerol uptake and metabolism. Catalyzes the phosphorylation of glycerol to yield sn-glycerol 3-phosphate. In Borreliella afzelii (strain PKo) (Borrelia afzelii), this protein is Glycerol kinase.